The chain runs to 122 residues: Large ribosomal subunit protein uL14c (122 aa).

Belongs to the universal ribosomal protein uL14 family. Part of the 50S ribosomal subunit.

It is found in the plastid. The protein resides in the chloroplast. Its function is as follows. Binds to 23S rRNA. The polypeptide is Large ribosomal subunit protein uL14c (Piper cenocladum (Ant piper)).